Reading from the N-terminus, the 128-residue chain is Probable 4-amino-4-deoxy-L-arabinose-phosphoundecaprenol flippase subunit ArnF (128 aa).

Residues 1-2 (MG) are Cytoplasmic-facing. The chain crosses the membrane as a helical span at residues 3–23 (LIWGLFSVIIASVAQLSLGFA). Residues 24-35 (ASHLPPMTHLWD) lie on the Periplasmic side of the membrane. A helical transmembrane segment spans residues 36–56 (FIAALLAFGLDARILLLGLLG). Over 57-76 (YLLSVFCWYKTLHKLALSKA) the chain is Cytoplasmic. The chain crosses the membrane as a helical span at residues 77-97 (YALLSMSYVLVWIASMVLPGW). Residues 98–100 (EGT) are Periplasmic-facing. Residues 101 to 121 (FSLKALLGVACIMSGLMLIFL) traverse the membrane as a helical segment. Residues 122-128 (PTTKQRY) are Cytoplasmic-facing.

The protein belongs to the ArnF family. As to quaternary structure, heterodimer of ArnE and ArnF.

It localises to the cell inner membrane. It functions in the pathway bacterial outer membrane biogenesis; lipopolysaccharide biosynthesis. Functionally, translocates 4-amino-4-deoxy-L-arabinose-phosphoundecaprenol (alpha-L-Ara4N-phosphoundecaprenol) from the cytoplasmic to the periplasmic side of the inner membrane. In Shigella boydii serotype 4 (strain Sb227), this protein is Probable 4-amino-4-deoxy-L-arabinose-phosphoundecaprenol flippase subunit ArnF.